The following is a 562-amino-acid chain: Dihydroxy-acid dehydratase (562 aa).

Cys53 is a [2Fe-2S] cluster binding site. Residue Asp85 participates in Mg(2+) binding. Cys126 lines the [2Fe-2S] cluster pocket. Residues Asp127 and Lys128 each coordinate Mg(2+). An N6-carboxylysine modification is found at Lys128. Cys198 contributes to the [2Fe-2S] cluster binding site. Glu449 provides a ligand contact to Mg(2+). Catalysis depends on Ser475, which acts as the Proton acceptor.

It belongs to the IlvD/Edd family. As to quaternary structure, homodimer. [2Fe-2S] cluster serves as cofactor. The cofactor is Mg(2+).

The catalysed reaction is (2R)-2,3-dihydroxy-3-methylbutanoate = 3-methyl-2-oxobutanoate + H2O. It carries out the reaction (2R,3R)-2,3-dihydroxy-3-methylpentanoate = (S)-3-methyl-2-oxopentanoate + H2O. It participates in amino-acid biosynthesis; L-isoleucine biosynthesis; L-isoleucine from 2-oxobutanoate: step 3/4. The protein operates within amino-acid biosynthesis; L-valine biosynthesis; L-valine from pyruvate: step 3/4. Functionally, functions in the biosynthesis of branched-chain amino acids. Catalyzes the dehydration of (2R,3R)-2,3-dihydroxy-3-methylpentanoate (2,3-dihydroxy-3-methylvalerate) into 2-oxo-3-methylpentanoate (2-oxo-3-methylvalerate) and of (2R)-2,3-dihydroxy-3-methylbutanoate (2,3-dihydroxyisovalerate) into 2-oxo-3-methylbutanoate (2-oxoisovalerate), the penultimate precursor to L-isoleucine and L-valine, respectively. This Methylococcus capsulatus (strain ATCC 33009 / NCIMB 11132 / Bath) protein is Dihydroxy-acid dehydratase.